We begin with the raw amino-acid sequence, 149 residues long: General odorant-binding protein 99b (149 aa).

An N-terminal signal peptide occupies residues 1–16 (MKVLIVLLLGLAFVLA). 3 disulfides stabilise this stretch: C40/C71, C67/C125, and C114/C134.

The protein belongs to the PBP/GOBP family. In terms of tissue distribution, expressed in adult olfactory system. Expressed in subsets of sensilla in both olfactory organs, the maxillary palps, and third antennal segments.

The protein localises to the secreted. Functionally, present in the aqueous fluid surrounding olfactory sensory dendrites and are thought to aid in the capture and transport of hydrophobic odorants into and through this fluid. The polypeptide is General odorant-binding protein 99b (Obp99b) (Drosophila melanogaster (Fruit fly)).